Reading from the N-terminus, the 185-residue chain is Ribosome-recycling factor (185 aa).

Belongs to the RRF family.

The protein resides in the cytoplasm. Functionally, responsible for the release of ribosomes from messenger RNA at the termination of protein biosynthesis. May increase the efficiency of translation by recycling ribosomes from one round of translation to another. The polypeptide is Ribosome-recycling factor (Pelobacter propionicus (strain DSM 2379 / NBRC 103807 / OttBd1)).